Here is a 55-residue protein sequence, read N- to C-terminus: ATP synthase F(0) complex subunit 8 (55 aa).

The chain crosses the membrane as a helical span at residues 7 to 24; it reads NPWFYIMLMSWLTFSLII. The segment at 35–55 is disordered; the sequence is NPPSNKTSTTTRTLPWTWPWT. Low complexity predominate over residues 41-55; the sequence is TSTTTRTLPWTWPWT.

The protein belongs to the ATPase protein 8 family. As to quaternary structure, component of the ATP synthase complex composed at least of ATP5F1A/subunit alpha, ATP5F1B/subunit beta, ATP5MC1/subunit c (homooctomer), MT-ATP6/subunit a, MT-ATP8/subunit 8, ATP5ME/subunit e, ATP5MF/subunit f, ATP5MG/subunit g, ATP5MK/subunit k, ATP5MJ/subunit j, ATP5F1C/subunit gamma, ATP5F1D/subunit delta, ATP5F1E/subunit epsilon, ATP5PF/subunit F6, ATP5PB/subunit b, ATP5PD/subunit d, ATP5PO/subunit OSCP. ATP synthase complex consists of a soluble F(1) head domain (subunits alpha(3) and beta(3)) - the catalytic core - and a membrane F(0) domain - the membrane proton channel (subunits c, a, 8, e, f, g, k and j). These two domains are linked by a central stalk (subunits gamma, delta, and epsilon) rotating inside the F1 region and a stationary peripheral stalk (subunits F6, b, d, and OSCP).

It localises to the mitochondrion membrane. Subunit 8, of the mitochondrial membrane ATP synthase complex (F(1)F(0) ATP synthase or Complex V) that produces ATP from ADP in the presence of a proton gradient across the membrane which is generated by electron transport complexes of the respiratory chain. ATP synthase complex consist of a soluble F(1) head domain - the catalytic core - and a membrane F(1) domain - the membrane proton channel. These two domains are linked by a central stalk rotating inside the F(1) region and a stationary peripheral stalk. During catalysis, ATP synthesis in the catalytic domain of F(1) is coupled via a rotary mechanism of the central stalk subunits to proton translocation. In vivo, can only synthesize ATP although its ATP hydrolase activity can be activated artificially in vitro. Part of the complex F(0) domain. This is ATP synthase F(0) complex subunit 8 from Corythaixoides concolor (Grey go-away-bird).